The chain runs to 486 residues: MNASDFRRRGKEMVDYMADYLEGIEGRQVYPDVQPGYLRPLIPATAPQEPDTFEDILQDVEKIIMPGVTHWHSPYFFAYFPTASSYPAMLADMLCGAIGCIGFSWAASPACTELETVMMDWLGKMLQLPEAFLAGEAGEGGGVIQGSASEATLVALLAARTKVVRRLQAASPGLTQGAVLEKLVAYASDQAHSSVERAGLIGGVKLKAIPSDGKFAMRASALQEALERDKAAGLIPFFVVATLGTTSCCSFDNLLEVGPICHEEDIWLHVDAAYAGSAFICPEFRHLLNGVEFADSFNFNPHKWLLVNFDCSAMWVKRRTDLTGAFKLDPVYLKHSHQGSGLITDYRHWQLPLGRRFRSLKMWFVFRMYGVKGLQAYIRKHVQLSHEFEAFVLQDPRFEVCAEVTLGLVCFRLKGSDGLNEALLERINSARKIHLVPCRLRGQFVLRFAICSRKVESGHVRLAWEHIRGLAAELLAAEEGKAEIKS.

An N-acetylmethionine modification is found at Met-1. 2 repeat units span residues 58 to 115 and 118 to 178. The interval 58-178 is 2 X approximate tandem repeats; it reads QDVEKIIMPG…AASPGLTQGA (121 aa). Thr-82 is a substrate binding site. Pyridoxal 5'-phosphate-binding residues include Ala-148 and Ser-149. Position 192 (His-192) interacts with substrate. Pyridoxal 5'-phosphate is bound by residues Thr-246 and Asn-300. Residue Lys-303 is modified to N6-(pyridoxal phosphate)lysine.

This sequence belongs to the group II decarboxylase family. Homodimer. It depends on pyridoxal 5'-phosphate as a cofactor.

It carries out the reaction L-dopa + H(+) = dopamine + CO2. The catalysed reaction is 5-hydroxy-L-tryptophan + H(+) = serotonin + CO2. Its pathway is catecholamine biosynthesis; dopamine biosynthesis; dopamine from L-tyrosine: step 2/2. Functionally, catalyzes the decarboxylation of L-3,4-dihydroxyphenylalanine (DOPA) to dopamine and L-5-hydroxytryptophan to serotonin. The chain is Aromatic-L-amino-acid decarboxylase (DDC) from Sus scrofa (Pig).